The sequence spans 393 residues: Ribonuclease D (393 aa).

The region spanning L14–E181 is the 3'-5' exonuclease domain. Residues N219–A300 enclose the HRDC domain.

It belongs to the RNase D family. Requires a divalent metal cation as cofactor.

The protein localises to the cytoplasm. It catalyses the reaction Exonucleolytic cleavage that removes extra residues from the 3'-terminus of tRNA to produce 5'-mononucleotides.. In terms of biological role, exonuclease involved in the 3' processing of various precursor tRNAs. Initiates hydrolysis at the 3'-terminus of an RNA molecule and releases 5'-mononucleotides. This chain is Ribonuclease D, found in Gluconacetobacter diazotrophicus (strain ATCC 49037 / DSM 5601 / CCUG 37298 / CIP 103539 / LMG 7603 / PAl5).